A 172-amino-acid chain; its full sequence is Small ribosomal subunit protein uS5 (172 aa).

The S5 DRBM domain occupies 17 to 80; the sequence is LREKMISVNR…EQARRNMFKV (64 aa).

This sequence belongs to the universal ribosomal protein uS5 family. Part of the 30S ribosomal subunit. Contacts proteins S4 and S8.

Functionally, with S4 and S12 plays an important role in translational accuracy. Its function is as follows. Located at the back of the 30S subunit body where it stabilizes the conformation of the head with respect to the body. This is Small ribosomal subunit protein uS5 from Burkholderia orbicola (strain AU 1054).